The primary structure comprises 226 residues: Large ribosomal subunit protein uL3 (226 aa).

The segment covering 135 to 150 (MSSQRASHGNSRSHNV) has biased composition (polar residues). Residues 135–158 (MSSQRASHGNSRSHNVPGSIGMAQ) form a disordered region. Residue Q158 is modified to N5-methylglutamine.

This sequence belongs to the universal ribosomal protein uL3 family. As to quaternary structure, part of the 50S ribosomal subunit. Forms a cluster with proteins L14 and L19. Post-translationally, methylated by PrmB.

In terms of biological role, one of the primary rRNA binding proteins, it binds directly near the 3'-end of the 23S rRNA, where it nucleates assembly of the 50S subunit. This is Large ribosomal subunit protein uL3 from Variovorax paradoxus (strain S110).